The following is a 142-amino-acid chain: NTF2-related export protein 2 (142 aa).

An NTF2 domain is found at 17–136 (AAEEFVNIYY…WKIASDCFRF (120 aa)).

Associates with NXF1, NXF2, NXF3 and NXF5.

It is found in the nucleus. The protein localises to the cytoplasm. Its function is as follows. Regulator of protein export for NES-containing proteins. Also plays a role in mRNA nuclear export. This chain is NTF2-related export protein 2 (Nxt2), found in Mus musculus (Mouse).